A 297-amino-acid polypeptide reads, in one-letter code: CCAAT/enhancer-binding protein beta (297 aa).

The required for Lys-134 sumoylation stretch occupies residues 1-22; that stretch reads MHRLLAWDAACLPPPPAAFRPM. Arginine 3 is subject to Asymmetric dimethylarginine; by CARM1. Positions 22–105 are required for MYC transcriptional repression; it reads MEVANFYYEP…YGAKPSKKPS (84 aa). Lysine 39 carries the post-translational modification N6-acetyllysine; alternate. N6-methylated lysine; alternate is present on lysine 39. N6-acetyllysine; by KAT2A and KAT2B is present on residues lysine 99 and lysine 102. Lysine 103 bears the N6-acetyllysine; by KAT2A and KAT2B; alternate mark. Lysine 103 is covalently cross-linked (Glycyl lysine isopeptide (Lys-Gly) (interchain with G-Cter in SUMO2); alternate). Serine 105 carries the post-translational modification Phosphoserine; by RPS6KA1 and PKC/PRKCA. A Glycyl lysine isopeptide (Lys-Gly) (interchain with G-Cter in SUMO2); alternate cross-link involves residue lysine 134. Lysine 134 is covalently cross-linked (Glycyl lysine isopeptide (Lys-Gly) (interchain with G-Cter in SUMO); alternate). Residue lysine 145 forms a Glycyl lysine isopeptide (Lys-Gly) (interchain with G-Cter in SUMO2) linkage. Residues 172 to 201 are disordered; that stretch reads SGSSGSLSTSSSSSPPGTPSPADAKAAPAA. Position 180 is a phosphothreonine; by GSK3-beta (threonine 180). Serine 181 and serine 182 each carry an O-linked (GlcNAc) serine glycan. Position 185 is a phosphoserine; by GSK3-beta (serine 185). Threonine 189 carries the post-translational modification Phosphothreonine; by RPS6KA1, CDK2 and MAPK. Glycyl lysine isopeptide (Lys-Gly) (interchain with G-Cter in SUMO2) cross-links involve residues lysine 212 and lysine 214. A bZIP domain is found at 223-286; it reads SDEYKMRRER…STLRNLFKQL (64 aa). The interval 227–247 is basic motif; sequence KMRRERNNIAVRKSRDKAKMR. Serine 240 is subject to Phosphoserine; by PKC/PRKCA. The interval 249-256 is leucine-zipper; that stretch reads LETQHKVL. Position 277 is a phosphoserine; by CaMK2 (serine 277). Lysine 284 participates in a covalent cross-link: Glycyl lysine isopeptide (Lys-Gly) (interchain with G-Cter in SUMO2).

This sequence belongs to the bZIP family. C/EBP subfamily. In terms of assembly, binds DNA as a homodimer and as a heterodimer. Interacts with MYB; within the complex, MYB and CEBPB bind to different promoter regions. Interacts with ATF4. Binds DNA as a heterodimer with ATF4. Can form stable heterodimers with CEBPA, CEBPD, CEBPE and CEBPG. Interacts with SIX1. Isoform 2 and isoform 3 also form heterodimers. Interacts with TRIM28 and PTGES2. Interacts with PRDM16. Interacts with CCDC85B. Forms a complex with THOC5. Interacts with ZNF638; this interaction increases transcriptional activation. Interacts with CIDEA and CIDEC; these interactions increase transcriptional activation of a subset of CEBPB downstream target genes. Interacts with DDIT3/CHOP. Interacts with EP300; recruits EP300 to chromatin. Interacts with RORA; the interaction disrupts interaction with EP300. Interacts (not methylated) with MED23, MED26, SMARCA2, SMARCB1 and SMARCC1. Interacts with KAT2A and KAT2B. Interacts with ATF5; EP300 is required for ATF5 and CEBPB interaction and DNA binding. Interacts with NFE2L1; the heterodimer represses expression of DSPP during odontoblast differentiation. Phosphorylated at Thr-189 by MAPK and CDK2, serves to prime phosphorylation at Thr-180 and Ser-185 by GSK3B and acquire DNA-binding as well as transactivation activities, required to induce adipogenesis. MAPK and CDK2 act sequentially to maintain Thr-189 in the primed phosphorylated state during mitotical cloning expansion and thereby progression of terminal differentiation. Phosphorylation at Ser-105 enhances transactivation activity. Phosphorylation at Ser-277 in response to calcium increases transactivation activity. Phosphorylated at Thr-189 by RPS6KA1. Post-translationally, methylated. Methylation at Arg-3 by CARM1 and at Lys-39 by EHMT2 inhibit transactivation activity. Methylation is probably inhibited by phosphorylation at Thr-189. In terms of processing, sumoylated by polymeric chains of SUMO2 or SUMO3. Sumoylation at Lys-134 is required for inhibition of T-cells proliferation. In adipocytes, sumoylation at Lys-134 by PIAS1 leads to ubiquitination and subsequent proteasomal degradation. Desumoylated by SENP2, which abolishes ubiquitination and stabilizes protein levels. Ubiquitinated, leading to proteasomal degradation. Post-translationally, O-glycosylated, glycosylation at Ser-181 and Ser-182 prevents phosphorylation on Thr-189, Ser-185 and Thr-180 and DNA binding activity which delays the adipocyte differentiation program. In terms of processing, acetylated. Acetylation at Lys-39 is an important and dynamic regulatory event that contributes to its ability to transactivate target genes, including those associated with adipogenesis and adipocyte function. Deacetylation by HDAC1 represses its transactivation activity. Acetylated by KAT2A and KAT2B within a cluster of lysine residues between amino acids 99-103, this acetylation is strongly induced by glucocorticoid treatment and enhances transactivation activity. In terms of tissue distribution, liver and lung.

It localises to the nucleus. It is found in the cytoplasm. Its function is as follows. Important transcription factor regulating the expression of genes involved in immune and inflammatory responses. Also plays a significant role in adipogenesis, as well as in the gluconeogenic pathway, liver regeneration, and hematopoiesis. The consensus recognition site is 5'-T[TG]NNGNAA[TG]-3'. Its functional capacity is governed by protein interactions and post-translational protein modifications. During early embryogenesis, plays essential and redundant roles with CEBPA. Has a promitotic effect on many cell types such as hepatocytes and adipocytes but has an antiproliferative effect on T-cells by repressing MYC expression, facilitating differentiation along the T-helper 2 lineage. Binds to regulatory regions of several acute-phase and cytokines genes and plays a role in the regulation of acute-phase reaction and inflammation. Also plays a role in intracellular bacteria killing. During adipogenesis, is rapidly expressed and, after activation by phosphorylation, induces CEBPA and PPARG, which turn on the series of adipocyte genes that give rise to the adipocyte phenotype. The delayed transactivation of the CEBPA and PPARG genes by CEBPB appears necessary to allow mitotic clonal expansion and thereby progression of terminal differentiation. Essential for female reproduction because of a critical role in ovarian follicle development. Restricts osteoclastogenesis: together with NFE2L1; represses expression of DSPP during odontoblast differentiation. Essential for gene expression induction in activated macrophages. Plays a major role in immune responses such as CD4(+) T-cell response, granuloma formation and endotoxin shock. Not essential for intracellular bacteria killing. In terms of biological role, acts as a dominant negative through heterodimerization with isoform 2. Promotes osteoblast differentiation and osteoclastogenesis. The polypeptide is CCAAT/enhancer-binding protein beta (Rattus norvegicus (Rat)).